Reading from the N-terminus, the 248-residue chain is Coproheme decarboxylase (248 aa).

Residues R130, 144-148 (YPMDK), H171, Q184, and S222 contribute to the Fe-coproporphyrin III site. The active site involves Y144.

It belongs to the ChdC family. Type 1 subfamily. Requires Fe-coproporphyrin III as cofactor.

The catalysed reaction is Fe-coproporphyrin III + 2 H2O2 + 2 H(+) = heme b + 2 CO2 + 4 H2O. It catalyses the reaction Fe-coproporphyrin III + H2O2 + H(+) = harderoheme III + CO2 + 2 H2O. It carries out the reaction harderoheme III + H2O2 + H(+) = heme b + CO2 + 2 H2O. The protein operates within porphyrin-containing compound metabolism; protoheme biosynthesis. Involved in coproporphyrin-dependent heme b biosynthesis. Catalyzes the decarboxylation of Fe-coproporphyrin III (coproheme) to heme b (protoheme IX), the last step of the pathway. The reaction occurs in a stepwise manner with a three-propionate intermediate. The polypeptide is Coproheme decarboxylase (Geobacillus thermodenitrificans (strain NG80-2)).